The primary structure comprises 781 residues: DEAD-box ATP-dependent RNA helicase 50 (781 aa).

Disordered stretches follow at residues Glu72–Ser103, Gly117–Phe148, Ile166–Arg240, Gly254–Arg292, and Tyr313–Gly342. Over residues Ser79 to Glu88 the composition is skewed to low complexity. The segment covering Glu130 to Ser143 has biased composition (acidic residues). The span at Lys171–Leu197 shows a compositional bias: basic and acidic residues. Over residues Glu198–Ser208 the composition is skewed to acidic residues. Residues Asn216–Ser226 are compositionally biased toward polar residues. The span at Gly254–Ser274 shows a compositional bias: basic and acidic residues. Positions Arg275 to Ser286 are enriched in low complexity. Basic and acidic residues predominate over residues Tyr313–Leu325. Residues Lys374 to Ala402 carry the Q motif motif. A Helicase ATP-binding domain is found at Phe405 to Val586. Asp418–Thr425 is an ATP binding site. Residues Asp533–Asp536 carry the DEAD box motif. One can recognise a Helicase C-terminal domain in the interval Asn621 to Thr781.

It belongs to the DEAD box helicase family.

It catalyses the reaction ATP + H2O = ADP + phosphate + H(+). In terms of biological role, probably involved in resistance to biotic and abiotic stresses. The protein is DEAD-box ATP-dependent RNA helicase 50 (RH50) of Arabidopsis thaliana (Mouse-ear cress).